We begin with the raw amino-acid sequence, 88 residues long: U-scoloptoxin(XY)-Er1b (88 aa).

Residues 1–24 (MASQVVLSFALVVVLAVFVGQVDS) form the signal peptide. Residues 66-88 (RPELSPGALDDSSEEKDNEASLA) form a disordered region. Residues 79–88 (EEKDNEASLA) constitute a propeptide that is removed on maturation.

The protein belongs to the scoloptoxin-XY family. Post-translationally, contains 3 disulfide bonds. As to expression, expressed by the venom gland.

The protein resides in the secreted. This Ethmostigmus rubripes (Giant centipede) protein is U-scoloptoxin(XY)-Er1b.